A 456-amino-acid chain; its full sequence is Enolase (456 aa).

Residue glutamine 164 coordinates (2R)-2-phosphoglycerate. Catalysis depends on glutamate 207, which acts as the Proton donor. Aspartate 244, glutamate 287, and aspartate 314 together coordinate Mg(2+). (2R)-2-phosphoglycerate-binding residues include lysine 339, arginine 368, serine 369, and lysine 390. Lysine 339 functions as the Proton acceptor in the catalytic mechanism.

Belongs to the enolase family. In terms of assembly, component of the RNA degradosome, a multiprotein complex involved in RNA processing and mRNA degradation. Requires Mg(2+) as cofactor.

It is found in the cytoplasm. It localises to the secreted. The protein localises to the cell surface. It carries out the reaction (2R)-2-phosphoglycerate = phosphoenolpyruvate + H2O. It functions in the pathway carbohydrate degradation; glycolysis; pyruvate from D-glyceraldehyde 3-phosphate: step 4/5. In terms of biological role, catalyzes the reversible conversion of 2-phosphoglycerate (2-PG) into phosphoenolpyruvate (PEP). It is essential for the degradation of carbohydrates via glycolysis. This Francisella tularensis subsp. novicida (strain U112) protein is Enolase.